We begin with the raw amino-acid sequence, 91 residues long: Small ribosomal subunit protein bS18 (91 aa).

Belongs to the bacterial ribosomal protein bS18 family. Part of the 30S ribosomal subunit. Forms a tight heterodimer with protein bS6.

Its function is as follows. Binds as a heterodimer with protein bS6 to the central domain of the 16S rRNA, where it helps stabilize the platform of the 30S subunit. The polypeptide is Small ribosomal subunit protein bS18 (Thiobacillus denitrificans (strain ATCC 25259 / T1)).